The following is a 158-amino-acid chain: SsrA-binding protein (158 aa).

A disordered region spans residues 131-158 (GKKTHDKRETEKKRDWNREKARLLRDRG). Residues 136–158 (DKRETEKKRDWNREKARLLRDRG) are compositionally biased toward basic and acidic residues.

It belongs to the SmpB family.

It is found in the cytoplasm. Its function is as follows. Required for rescue of stalled ribosomes mediated by trans-translation. Binds to transfer-messenger RNA (tmRNA), required for stable association of tmRNA with ribosomes. tmRNA and SmpB together mimic tRNA shape, replacing the anticodon stem-loop with SmpB. tmRNA is encoded by the ssrA gene; the 2 termini fold to resemble tRNA(Ala) and it encodes a 'tag peptide', a short internal open reading frame. During trans-translation Ala-aminoacylated tmRNA acts like a tRNA, entering the A-site of stalled ribosomes, displacing the stalled mRNA. The ribosome then switches to translate the ORF on the tmRNA; the nascent peptide is terminated with the 'tag peptide' encoded by the tmRNA and targeted for degradation. The ribosome is freed to recommence translation, which seems to be the essential function of trans-translation. In Brucella abortus biovar 1 (strain 9-941), this protein is SsrA-binding protein.